The following is a 668-amino-acid chain: Transketolase 2 (668 aa).

Position 26 (His26) interacts with substrate. Thiamine diphosphate-binding positions include His66 and 114 to 116 (GPL). A Mg(2+)-binding site is contributed by Asp155. Residues Gly156 and Asn185 each coordinate thiamine diphosphate. Residues Asn185 and Ile187 each contribute to the Mg(2+) site. Residues His261, Arg358, and Ser385 each coordinate substrate. Residue His261 participates in thiamine diphosphate binding. Glu413 serves as the catalytic Proton donor. Phe439 lines the thiamine diphosphate pocket. The substrate site is built by His463, Asp471, and Arg522.

Belongs to the transketolase family. Homodimer. Mg(2+) is required as a cofactor. Requires Ca(2+) as cofactor. It depends on Mn(2+) as a cofactor. The cofactor is Co(2+). Thiamine diphosphate serves as cofactor.

It catalyses the reaction D-sedoheptulose 7-phosphate + D-glyceraldehyde 3-phosphate = aldehydo-D-ribose 5-phosphate + D-xylulose 5-phosphate. Functionally, catalyzes the transfer of a two-carbon ketol group from a ketose donor to an aldose acceptor, via a covalent intermediate with the cofactor thiamine pyrophosphate. The sequence is that of Transketolase 2 (tktB) from Pasteurella multocida (strain Pm70).